Reading from the N-terminus, the 504-residue chain is MSLICSISNEVPEHPCVSPVSNHVYERRLIEKYIAENGTDPINNQPLSEEQLIDIKVAHPIRPKPPSATSIPAILKALQDEWDAVMLHSFTLRQQLQTTRQELSHALYQHDAACRVIARLTKEVTAAREALATLKPQAGLIVPQAVPSSQPSVVGAGEPMDLGELVGMTPEIIQKLQDKATVLTTERKKRGKTVPEELVKPEELSKYRQVASHVGLHSASIPGILALDLCPSDTNKILTGGADKNVVVFDKSTEQILATLKGHTKKVTSVVFHPSQELVFSASPDATIRIWSVPNTSCVQVVRAHESAVTGLSLHATGDYLLSSSDDQYWAFSDIQTGRVLTKVTDETSGCSLTCAQFHPDGLIFGTGTMDSQIKIWDLKERTNVANFPGHSGPITSIAFSENGYYLATAADDSSVKLWDLRKLKNFKTLQLDNNFEVKSLIFDQSGTYLALGGTDVQIYICKQWTEILHFTEHSGLTTGVAFGHHAKFIASTGMDRSLKFYSL.

At Ser2 the chain carries N-acetylserine. One can recognise a U-box domain in the interval 2–73; the sequence is SLICSISNEV…KPPSATSIPA (72 aa). Residues 68–223 are may mediate interaction with PSMC5; sequence ATSIPAILKA…VGLHSASIPG (156 aa). 4 positions are modified to N6-acetyllysine: Lys122, Lys179, Lys244, and Lys261. A WD 1 repeat occupies 219-259; it reads ASIPGILALDLCPSDTNKILTGGADKNVVVFDKSTEQILAT. 6 WD repeats span residues 262–301, 304–345, 348–387, 390–429, 433–472, and 473–503; these read GHTK…CVQV, AHES…TKVT, TSGC…NVAN, GHSG…NFKT, DNNF…LHFT, and EHSG…KFYS.

Belongs to the WD repeat PRP19 family. As to quaternary structure, homotetramer. Component of activated, catalytic and post-catalytic spliceosomes. Component of the Prp19 complex/PRP19C/Nineteen complex/NTC and related complexes described as PRP19-CDC5L splicing complex and PSO4 complex. A homotetramer of PRPF19, CDC5L, PLRG1 and BCAS2 constitute the core of those complexes. The interaction with CDC5L, PLRG1 and BCAS2 is direct within this core complex. At least three less stably associated proteins CTNNBL1, CWC15 and HSPA8 are found in the Prp19 complex. The Prp19 complex associates with the spliceosome during its assembly and remodeling recruiting additional proteins. Component of the XAB2 complex, a multimeric protein complex composed of XAB2, PRPF19, AQR, ZNF830, ISY1, and PPIE. Interacts with CWC22 and EIF4A3 in an RNA-independent manner. Interacts with RPA1 and RPA2; the PRP19-CDC5L complex is recruited to the sites of DNA repair where it interacts with the replication protein A complex (RPA). Interacts with SETMAR; required for SETMAR recruitment to site of DNA damage. Interacts with U2AF2; the interaction is direct and recruits the Prp19 complex to RNA polymerase II C-terminal domain (CTD) and the pre-mRNA. Interacts with PRPF3. Interacts with APEX1, DNTT and PSMB4. Interacts with KNSTRN. Interacts with PSMC5. Isoform 2 (via N-terminus) interacts with PPIA. Isoform 2 does not interact with CDC5L. Interacts with KHDC4. Interacts with USB1. Interacts with DDX41. In terms of tissue distribution, expressed in white and brown adipose tissues, brain and to a lower extent in liver, kidney, muscle, lung and spleen (at protein level).

The protein localises to the nucleus. It is found in the nucleoplasm. It localises to the cytoplasm. Its subcellular location is the cytoskeleton. The protein resides in the spindle. The protein localises to the lipid droplet. It catalyses the reaction S-ubiquitinyl-[E2 ubiquitin-conjugating enzyme]-L-cysteine + [acceptor protein]-L-lysine = [E2 ubiquitin-conjugating enzyme]-L-cysteine + N(6)-ubiquitinyl-[acceptor protein]-L-lysine.. The protein operates within protein modification; protein ubiquitination. Ubiquitin-protein ligase which is a core component of several complexes mainly involved in pre-mRNA splicing and DNA repair. Required for pre-mRNA splicing as component of the spliceosome. Core component of the PRP19C/Prp19 complex/NTC/Nineteen complex which is part of the spliceosome and participates in its assembly, its remodeling and is required for its activity. During assembly of the spliceosome, mediates 'Lys-63'-linked polyubiquitination of the U4 spliceosomal protein PRPF3. Ubiquitination of PRPF3 allows its recognition by the U5 component PRPF8 and stabilizes the U4/U5/U6 tri-snRNP spliceosomal complex. Recruited to RNA polymerase II C-terminal domain (CTD) and the pre-mRNA, it may also couple the transcriptional and spliceosomal machineries. The XAB2 complex, which contains PRPF19, is also involved in pre-mRNA splicing, transcription and transcription-coupled repair. Beside its role in pre-mRNA splicing PRPF19, as part of the PRP19-CDC5L complex, plays a role in the DNA damage response/DDR. It is recruited to the sites of DNA damage by the RPA complex where PRPF19 directly ubiquitinates RPA1 and RPA2. 'Lys-63'-linked polyubiquitination of the RPA complex allows the recruitment of the ATR-ATRIP complex and the activation of ATR, a master regulator of the DNA damage response. May also play a role in DNA double-strand break (DSB) repair by recruiting the repair factor SETMAR to altered DNA. As part of the PSO4 complex may also be involved in the DNA interstrand cross-links/ICLs repair process. In addition, may also mediate 'Lys-48'-linked polyubiquitination of substrates and play a role in proteasomal degradation. May play a role in the biogenesis of lipid droplets. May play a role in neural differentiation possibly through its function as part of the spliceosome. Functionally, forced expression leads to suppression of neuronal differentiation, and on the contrary to stimulation of astroglial cell differentiation in retinoic acid-primed P19 cells. The protein is Pre-mRNA-processing factor 19 of Mus musculus (Mouse).